Consider the following 169-residue polypeptide: Caltractin (169 aa).

Positions 1 to 24 are disordered; sequence MSYRKTVVSARRDQKKGRVGGLTE. EF-hand domains follow at residues 25–60, 61–96, 98–133, and 134–169; these read EQKQ…LGFE, PKKE…KMGE, DSRE…LGEN, and LTDE…TSLF. The Ca(2+) site is built by Asp38, Asp40, Ser42, Thr44, and Glu49. Residues Asp147, Asn149, Asp151, Gln153, and Glu158 each contribute to the Ca(2+) site.

It belongs to the centrin family.

Functionally, this calcium-binding protein is found in the basal body complexes (the functional homolog of the centrosome in animal cell). In mitotic cells it is specifically associated with the poles of the mitotic spindles at the sites of the duplicated basal body complexes. The protein is Caltractin of Dunaliella salina (Green alga).